Reading from the N-terminus, the 352-residue chain is Alanine racemase (352 aa).

K34 acts as the Proton acceptor; specific for D-alanine in catalysis. N6-(pyridoxal phosphate)lysine is present on K34. Residue R126 coordinates substrate. Y248 (proton acceptor; specific for L-alanine) is an active-site residue. A substrate-binding site is contributed by M296.

Belongs to the alanine racemase family. Pyridoxal 5'-phosphate is required as a cofactor.

The catalysed reaction is L-alanine = D-alanine. It participates in amino-acid biosynthesis; D-alanine biosynthesis; D-alanine from L-alanine: step 1/1. Its function is as follows. Catalyzes the interconversion of L-alanine and D-alanine. May also act on other amino acids. The chain is Alanine racemase (alr) from Deinococcus deserti (strain DSM 17065 / CIP 109153 / LMG 22923 / VCD115).